Consider the following 48-residue polypeptide: Large ribosomal subunit protein bL33A (48 aa).

This sequence belongs to the bacterial ribosomal protein bL33 family.

This is Large ribosomal subunit protein bL33A from Shouchella clausii (strain KSM-K16) (Alkalihalobacillus clausii).